The sequence spans 100 residues: Nucleoid-associated protein MYPU_0500 (100 aa).

The protein belongs to the YbaB/EbfC family. In terms of assembly, homodimer.

The protein resides in the cytoplasm. The protein localises to the nucleoid. In terms of biological role, binds to DNA and alters its conformation. May be involved in regulation of gene expression, nucleoid organization and DNA protection. The protein is Nucleoid-associated protein MYPU_0500 of Mycoplasmopsis pulmonis (strain UAB CTIP) (Mycoplasma pulmonis).